Reading from the N-terminus, the 377-residue chain is Succinyl-diaminopimelate desuccinylase (377 aa).

Residue histidine 68 participates in Zn(2+) binding. Aspartate 70 is an active-site residue. Aspartate 101 serves as a coordination point for Zn(2+). Residue glutamate 135 is the Proton acceptor of the active site. Glutamate 136, glutamate 164, and histidine 350 together coordinate Zn(2+).

It belongs to the peptidase M20A family. DapE subfamily. In terms of assembly, homodimer. Zn(2+) is required as a cofactor. Co(2+) serves as cofactor.

The catalysed reaction is N-succinyl-(2S,6S)-2,6-diaminopimelate + H2O = (2S,6S)-2,6-diaminopimelate + succinate. Its pathway is amino-acid biosynthesis; L-lysine biosynthesis via DAP pathway; LL-2,6-diaminopimelate from (S)-tetrahydrodipicolinate (succinylase route): step 3/3. Catalyzes the hydrolysis of N-succinyl-L,L-diaminopimelic acid (SDAP), forming succinate and LL-2,6-diaminopimelate (DAP), an intermediate involved in the bacterial biosynthesis of lysine and meso-diaminopimelic acid, an essential component of bacterial cell walls. The protein is Succinyl-diaminopimelate desuccinylase of Psychromonas ingrahamii (strain DSM 17664 / CCUG 51855 / 37).